A 211-amino-acid chain; its full sequence is uncharacterized protein (211 aa).

A signal peptide spans 1–20 (MSRVQISTVLAIDTATPAVT).

It to M.leprae ML0378.

This is an uncharacterized protein from Mycobacterium tuberculosis (strain CDC 1551 / Oshkosh).